We begin with the raw amino-acid sequence, 64 residues long: Cytochrome c oxidase subunit 2 (64 aa).

Residues Met-1–Ser-14 are Mitochondrial intermembrane-facing. Residues Pro-15 to Met-45 traverse the membrane as a helical segment. Over Leu-46 to Ile-64 the chain is Mitochondrial matrix.

Belongs to the cytochrome c oxidase subunit 2 family. As to quaternary structure, component of the cytochrome c oxidase (complex IV, CIV), a multisubunit enzyme composed of 14 subunits. The complex is composed of a catalytic core of 3 subunits MT-CO1, MT-CO2 and MT-CO3, encoded in the mitochondrial DNA, and 11 supernumerary subunits COX4I, COX5A, COX5B, COX6A, COX6B, COX6C, COX7A, COX7B, COX7C, COX8 and NDUFA4, which are encoded in the nuclear genome. The complex exists as a monomer or a dimer and forms supercomplexes (SCs) in the inner mitochondrial membrane with NADH-ubiquinone oxidoreductase (complex I, CI) and ubiquinol-cytochrome c oxidoreductase (cytochrome b-c1 complex, complex III, CIII), resulting in different assemblies (supercomplex SCI(1)III(2)IV(1) and megacomplex MCI(2)III(2)IV(2)). Found in a complex with TMEM177, COA6, COX18, COX20, SCO1 and SCO2. Interacts with TMEM177 in a COX20-dependent manner. Interacts with COX20. Interacts with COX16. Requires Cu cation as cofactor.

Its subcellular location is the mitochondrion inner membrane. It catalyses the reaction 4 Fe(II)-[cytochrome c] + O2 + 8 H(+)(in) = 4 Fe(III)-[cytochrome c] + 2 H2O + 4 H(+)(out). Its function is as follows. Component of the cytochrome c oxidase, the last enzyme in the mitochondrial electron transport chain which drives oxidative phosphorylation. The respiratory chain contains 3 multisubunit complexes succinate dehydrogenase (complex II, CII), ubiquinol-cytochrome c oxidoreductase (cytochrome b-c1 complex, complex III, CIII) and cytochrome c oxidase (complex IV, CIV), that cooperate to transfer electrons derived from NADH and succinate to molecular oxygen, creating an electrochemical gradient over the inner membrane that drives transmembrane transport and the ATP synthase. Cytochrome c oxidase is the component of the respiratory chain that catalyzes the reduction of oxygen to water. Electrons originating from reduced cytochrome c in the intermembrane space (IMS) are transferred via the dinuclear copper A center (CU(A)) of subunit 2 and heme A of subunit 1 to the active site in subunit 1, a binuclear center (BNC) formed by heme A3 and copper B (CU(B)). The BNC reduces molecular oxygen to 2 water molecules using 4 electrons from cytochrome c in the IMS and 4 protons from the mitochondrial matrix. The chain is Cytochrome c oxidase subunit 2 (mt-co2) from Geophagus steindachneri (Red hump earth eater).